Here is a 232-residue protein sequence, read N- to C-terminus: Enolase-phosphatase E1 (232 aa).

It belongs to the HAD-like hydrolase superfamily. MasA/MtnC family. Monomer. Mg(2+) is required as a cofactor.

The catalysed reaction is 5-methylsulfanyl-2,3-dioxopentyl phosphate + H2O = 1,2-dihydroxy-5-(methylsulfanyl)pent-1-en-3-one + phosphate. It participates in amino-acid biosynthesis; L-methionine biosynthesis via salvage pathway; L-methionine from S-methyl-5-thio-alpha-D-ribose 1-phosphate: step 3/6. Its pathway is amino-acid biosynthesis; L-methionine biosynthesis via salvage pathway; L-methionine from S-methyl-5-thio-alpha-D-ribose 1-phosphate: step 4/6. Its function is as follows. Bifunctional enzyme that catalyzes the enolization of 2,3-diketo-5-methylthiopentyl-1-phosphate (DK-MTP-1-P) into the intermediate 2-hydroxy-3-keto-5-methylthiopentenyl-1-phosphate (HK-MTPenyl-1-P), which is then dephosphorylated to form the acireductone 1,2-dihydroxy-3-keto-5-methylthiopentene (DHK-MTPene). This is Enolase-phosphatase E1 from Sorangium cellulosum (strain So ce56) (Polyangium cellulosum (strain So ce56)).